The following is a 206-amino-acid chain: 3-isopropylmalate dehydratase small subunit (206 aa).

Belongs to the LeuD family. LeuD type 1 subfamily. In terms of assembly, heterodimer of LeuC and LeuD.

The catalysed reaction is (2R,3S)-3-isopropylmalate = (2S)-2-isopropylmalate. The protein operates within amino-acid biosynthesis; L-leucine biosynthesis; L-leucine from 3-methyl-2-oxobutanoate: step 2/4. Catalyzes the isomerization between 2-isopropylmalate and 3-isopropylmalate, via the formation of 2-isopropylmaleate. The polypeptide is 3-isopropylmalate dehydratase small subunit (Leptospira interrogans serogroup Icterohaemorrhagiae serovar copenhageni (strain Fiocruz L1-130)).